Consider the following 510-residue polypeptide: Probable cytochrome P450 4aa1 (510 aa).

C450 provides a ligand contact to heme.

The protein belongs to the cytochrome P450 family. The cofactor is heme.

The protein localises to the endoplasmic reticulum membrane. It localises to the microsome membrane. May be involved in the metabolism of insect hormones and in the breakdown of synthetic insecticides. The chain is Probable cytochrome P450 4aa1 (Cyp4aa1) from Drosophila melanogaster (Fruit fly).